A 322-amino-acid polypeptide reads, in one-letter code: Pilin gene-inverting protein (322 aa).

In terms of biological role, may be the site-specific invertase required for pilin gene inversion. Moraxella can express either a Q or I pilin; the inversion of 2 kb of DNA determines which pilin is expressed. The polypeptide is Pilin gene-inverting protein (piv) (Moraxella lacunata).